Here is a 432-residue protein sequence, read N- to C-terminus: Glutamyl-tRNA reductase (432 aa).

Substrate contacts are provided by residues 55–58, Ser-113, 118–120, and Gln-124; these read TCNR and EAQ. Cys-56 acts as the Nucleophile in catalysis. 193 to 198 is a binding site for NADP(+); that stretch reads GAGEMI.

Belongs to the glutamyl-tRNA reductase family. Homodimer.

It catalyses the reaction (S)-4-amino-5-oxopentanoate + tRNA(Glu) + NADP(+) = L-glutamyl-tRNA(Glu) + NADPH + H(+). The protein operates within porphyrin-containing compound metabolism; protoporphyrin-IX biosynthesis; 5-aminolevulinate from L-glutamyl-tRNA(Glu): step 1/2. Functionally, catalyzes the NADPH-dependent reduction of glutamyl-tRNA(Glu) to glutamate 1-semialdehyde (GSA). The chain is Glutamyl-tRNA reductase from Paracidovorax citrulli (strain AAC00-1) (Acidovorax citrulli).